The primary structure comprises 329 residues: (+)-eremophilene synthase (329 aa).

Residues Asp-91 and Glu-96 each coordinate Mg(2+). Positions 91–95 (DDAYD) match the DDXXD motif motif. Arg-185 is a binding site for substrate. Residues Asn-231 and Ser-235 each contribute to the Mg(2+) site. Lys-238 contributes to the substrate binding site. Position 239 (Glu-239) interacts with Mg(2+). Position 317 to 318 (317 to 318 (RY)) interacts with substrate.

It belongs to the terpene synthase family. Mg(2+) serves as cofactor.

It carries out the reaction (2E,6E)-farnesyl diphosphate = (+)-eremophilene + diphosphate. It functions in the pathway secondary metabolite biosynthesis; terpenoid biosynthesis. Its function is as follows. Catalyzes the conversion of (2E,6E)-farnesyl diphosphate (FPP) to yield the bicyclic sesquiterpene eremophilene via a 1,10-cyclization, which requires the abstraction of the pyrophosphate from FPP to yield the (E,E)-germacradienyl cation. The only accepted substrate is farnesyl diphosphate (FPP). The sequence is that of (+)-eremophilene synthase from Sorangium cellulosum (strain So ce56) (Polyangium cellulosum (strain So ce56)).